Consider the following 282-residue polypeptide: Ribosome biogenesis GTPase A (282 aa).

The CP-type G domain maps to 14 to 178 (RREVTEKLKL…LLDTPGILWP (165 aa)). Residues 58-61 (NKAD), 86-87 (NS), 130-135 (NVGKST), and G174 contribute to the GTP site.

This sequence belongs to the TRAFAC class YlqF/YawG GTPase family. MTG1 subfamily. In terms of assembly, interacts with ctc. Interacts with the immature 50S ribosome subunit. 2 molecules of rbgA bind to one 50S subunit.

It is found in the cytoplasm. Essential protein that is required for a late step of 50S ribosomal subunit assembly. Has GTPase activity that is stimulated by interaction with the immature 50S ribosome subunit. Binds to the 23S rRNA. Required for the association of ribosomal proteins rplP and rpmA with the large subunit. The sequence is that of Ribosome biogenesis GTPase A from Bacillus pumilus (strain SAFR-032).